The chain runs to 208 residues: MSSFQLPKLSYDYDELEPHIDSNTLSIHHGKHHATYVNNLNATLENYTELHNKSLEELLCNLDTLPKEIVTAVRNNGGGHYCHSLFWEVMSPRGGGEPNGDVAKVIDYYFNTFDNLKDQLSKAAISRFGSGYGWLVLDGEELSVMSTPNQDTPLQEGKIPLLVIDVWEHAYYLKYQNRRPEFVTNWWHTVNWDQVNEKYLQAIQSQKH.

Positions 28, 83, 165, and 169 each coordinate Mn(2+).

It belongs to the iron/manganese superoxide dismutase family. As to quaternary structure, homodimer. The cofactor is Mn(2+).

The catalysed reaction is 2 superoxide + 2 H(+) = H2O2 + O2. Destroys superoxide anion radicals which are normally produced within the cells and which are toxic to biological systems. This chain is Superoxide dismutase [Mn] 2 (sodA2), found in Bacillus cereus (strain ATCC 14579 / DSM 31 / CCUG 7414 / JCM 2152 / NBRC 15305 / NCIMB 9373 / NCTC 2599 / NRRL B-3711).